A 1250-amino-acid chain; its full sequence is Immunoglobulin superfamily DCC subclass member 4 (1250 aa).

The first 24 residues, Met-1–Gly-24, serve as a signal peptide directing secretion. The Extracellular portion of the chain corresponds to Glu-25–Thr-957. 4 Ig-like C2-type domains span residues Pro-29 to Val-137, Ala-143 to Ser-229, Gln-242 to Arg-330, and Pro-335 to Ala-421. Cys-57 and Cys-121 form a disulfide bridge. N-linked (GlcNAc...) asparagine glycosylation is found at Asn-90, Asn-102, and Asn-157. A disulfide bridge links Cys-164 with Cys-212. Asn-252 carries an N-linked (GlcNAc...) asparagine glycan. Cystine bridges form between Cys-265/Cys-312 and Cys-356/Cys-405. Fibronectin type-III domains are found at residues Ala-431 to Asp-525, Pro-527 to Met-623, Ala-632 to Pro-741, Pro-752 to Asp-845, and Pro-850 to Glu-945. N-linked (GlcNAc...) asparagine glycosylation occurs at Asn-582. The helical transmembrane segment at Gly-958–Leu-978 threads the bilayer. At Arg-979 to Ala-1250 the chain is on the cytoplasmic side. Thr-995 carries the phosphothreonine modification. 2 disordered regions span residues Ser-1140–Gln-1175 and Pro-1215–Ala-1250.

This sequence belongs to the immunoglobulin superfamily. DCC family.

The protein localises to the cell membrane. This chain is Immunoglobulin superfamily DCC subclass member 4 (IGDCC4), found in Homo sapiens (Human).